We begin with the raw amino-acid sequence, 1052 residues long: MMGTSRCVILLFALLLWAANAAPPEIHTTRPNVPEEIKRPNSTEIETPAVKQLETPSIFLLTTLEVAEADVDSTLETMKDRNKKNSAKLSKIGNNMKSLLSVFSVFGGFLSLLSVVTTTSDLQVISDMFTGVNRKLDQINDKLDKLDNSVELQGLLTNYIPWQYSVKNGIEKLIETYKKMVEETDMNKRRLMAENFILFFENNQIESNINNLIKLTTTTDAVHQNMLFNELLDEAGCDIIRLTRIYMHVRRIFYQGTQLVLAYNSFKQMDPPEMKKYLNALIFIRNMYQSRVWHCKETTIAQSKKDIKDIVKTNAKFGITTVLRKINSELSRKYPWYSWSIVTVKKMLANQRNSTLGNQFYEMEAVGPHGSNFVVIWQGFKEHSQCEDIQKANTIAVLTICKSCHQSHVFTPSNMLNKNTCPNNQYPQVKAFIDRREPFRDEIQRKKSDVFWVAAGFKAPGNPCNHGCNGHGECKVVPYTDQFQCFCHGNYEGKMCQKKIQMKRDISKLISDLQTGYKNAFNVPSLTNILIQGENLAKQLKKMIQRIDNQFELTHILVKYISDLQKLDYILKISFNYSKKKITVDAFSRRMKAFLSLNPVDFIFQQLSNAILAEGFTDIQGKDFFNTFKRMIASNRDACTAPYGNEATILLERLSRLDLTAAESILAYYSFESNYLNPANMKRMLENAKQLVRDSKRRMRSYARYWERTSCPPLNVTHLTQTGCGALLSFEGMKVKLSCDGGRAAVPQNIECVNVNGNLQWSATPKCESSWSRWSKWSACASTCGNATQSRRRRCLGQSESEKCIGPSKQVRKCFVEDCCQEKYGKFKCDNNKCISLSRVCDGNDDCRNAEDESKSRCKYLRSGDRIALRNMAYSQEWLSVQYTDAVQADLYYGRAYLNHCIKGDHVTSSEWNSCAGQSLLIYGNYENGKIGKAIRFGDKIAMYYRKTNYHYRWFICYPTYCMTYTCPKKAGSFTFGPNGGCDEYEFYIINYNDKLSRDPVKPGDVITLANNRGSVKGNGYNRNININDCTVKRAQDDRIECNANAWQIFIK.

A signal peptide spans 1 to 21; the sequence is MMGTSRCVILLFALLLWAANA. Residues 22–29 constitute a propeptide that is removed on maturation; sequence APPEIHTT. A glycan (N-linked (GlcNAc...) asparagine) is linked at N41. The stretch at 130 to 194 forms a coiled coil; sequence TGVNRKLDQI…DMNKRRLMAE (65 aa). N-linked (GlcNAc...) asparagine glycosylation is present at N353. One can recognise an EGF-like domain in the interval 460 to 497; that stretch reads PGNPCNHGCNGHGECKVVPYTDQFQCFCHGNYEGKMCQ. Intrachain disulfides connect C464-C474, C468-C485, and C487-C496. Residues N576 and N715 are each glycosylated (N-linked (GlcNAc...) asparagine). The region spanning 709–769 is the Sushi domain; sequence TSCPPLNVTH…QWSATPKCES (61 aa). Intrachain disulfides connect C711–C752, C739–C767, C780–C814, C784–C820, C795–C804, C829–C847, and C841–C858. The TSP type-1 domain maps to 768–821; that stretch reads ESSWSRWSKWSACASTCGNATQSRRRRCLGQSESEKCIGPSKQVRKCFVEDCCQ. N786 carries an N-linked (GlcNAc...) asparagine glycan. The region spanning 819-859 is the LDL-receptor class A domain; that stretch reads CCQEKYGKFKCDNNKCISLSRVCDGNDDCRNAEDESKSRCK.

In terms of assembly, monomer. As to expression, expressed by the salivary gland.

It localises to the secreted. The polypeptide is SE-cephalotoxin (Acanthosepion esculentum (Golden cuttlefish)).